The chain runs to 215 residues: Sodium channel regulatory subunit beta-3 (215 aa).

A signal peptide spans 1 to 22; sequence MPAFNRLFPLVSLVLIYWASVC. Topologically, residues 23–156 are extracellular; it reads FPVCVEVPSE…EEAGEDFTSV (134 aa). The region spanning 24 to 138 is the Ig-like C2-type domain; the sequence is PVCVEVPSET…EAHRPFVKTT (115 aa). 2 disulfide bridges follow: cysteine 26–cysteine 48 and cysteine 45–cysteine 120. 4 N-linked (GlcNAc...) asparagine glycosylation sites follow: asparagine 95, asparagine 109, asparagine 113, and asparagine 121. Residues 157 to 178 form a helical membrane-spanning segment; it reads VSEIMMYILLVFLTLWLLIEMI. Residues 179-215 are Cytoplasmic-facing; it reads YCYRKVSKAEEAAQENASDYLAIPSENKENSAVPVEE.

This sequence belongs to the sodium channel auxiliary subunit SCN3B (TC 8.A.17) family. As to quaternary structure, a voltage-gated sodium (Nav) channel consists of an ion-conducting pore-forming alpha subunit functional on its own that is regulated by one or more beta subunits. Forms homodimers and homotrimers. SCN3B is non-covalently associated with alpha subunits and induces the formation of alpha subunit oligomers, including trimers. Interacts with SCN5A/Nav1.5; regulatory subunit of SCN5A/Nav1.5. Interacts with SCN7A/Nav2.1; probable regulatory subunit of SCN7A/Nav2.1. Interacts with SCN10A; regulatory subunit of SCN10A/Nav1.8. Interacts with NFASC; probably involved in targeting the sodium channels to the nodes of Ranvier. Intramolecular disulfide bonds favor the voltage-gated sodium channel oligomeric complex assembly. In terms of processing, N-glycosylated.

Its subcellular location is the cell membrane. In terms of biological role, regulatory subunit of multiple voltage-gated sodium (Nav) channels directly mediating the depolarization of excitable membranes. Navs, also called VGSCs (voltage-gated sodium channels) or VDSCs (voltage-dependent sodium channels), operate by switching between closed and open conformations depending on the voltage difference across the membrane. In the open conformation they allow Na(+) ions to selectively pass through the pore, along their electrochemical gradient. The influx of Na+ ions provokes membrane depolarization, initiating the propagation of electrical signals throughout cells and tissues. The accessory beta subunits participate in localization and functional modulation of the Nav channels. Modulates the activity of SCN2A/Nav1.2, causing a hyperpolarizing shift in the voltage-dependence of inactivation of the channel and increasing the fraction of channels operating in the fast gating mode. Modulates the activity of SCN5A/Nav1.5. Could also regulate the atypical sodium channel SCN7A/Nav2.1. Modulates the activity of SCN10A/Nav1.8, regulating its oligomerization and accelerating the recovery from inactivation. The sequence is that of Sodium channel regulatory subunit beta-3 from Macaca fascicularis (Crab-eating macaque).